The sequence spans 500 residues: Coiled-coil domain-containing protein 125 (500 aa).

Residues 1 to 105 (MSKVPRSSSE…TDSNSELSDE (105 aa)) form a disordered region. Acidic residues predominate over residues 10–23 (EAEDIWETEDDMTE). Residues 92 to 101 (RLSSTDSNSE) show a composition bias toward polar residues. Coiled-coil stretches lie at residues 101-237 (ELSD…LEAL) and 286-314 (STRKLVLQLRHELETLQKSKEEAHITADA). Residue serine 492 is modified to Phosphoserine.

In terms of tissue distribution, expressed in many tissues, with highest levels in spleen, thymus and bone marrow.

The protein resides in the cytoplasm. Functionally, may be involved in the regulation of cell migration. In Mus musculus (Mouse), this protein is Coiled-coil domain-containing protein 125 (Ccdc125).